The following is a 398-amino-acid chain: Isochorismate synthase DhbC (398 aa).

At Ser271 the chain carries Phosphoserine.

It belongs to the isochorismate synthase family.

It catalyses the reaction chorismate = isochorismate. It participates in siderophore biosynthesis; bacillibactin biosynthesis. The chain is Isochorismate synthase DhbC (dhbC) from Bacillus subtilis (strain 168).